A 362-amino-acid chain; its full sequence is Methylthioribose-1-phosphate isomerase (362 aa).

Substrate-binding positions include 49–51, R89, and Q201; that span reads RGA. Residue D242 is the Proton donor of the active site. 252 to 253 lines the substrate pocket; it reads NK.

It belongs to the eIF-2B alpha/beta/delta subunits family. MtnA subfamily.

The catalysed reaction is 5-(methylsulfanyl)-alpha-D-ribose 1-phosphate = 5-(methylsulfanyl)-D-ribulose 1-phosphate. It functions in the pathway amino-acid biosynthesis; L-methionine biosynthesis via salvage pathway; L-methionine from S-methyl-5-thio-alpha-D-ribose 1-phosphate: step 1/6. Functionally, catalyzes the interconversion of methylthioribose-1-phosphate (MTR-1-P) into methylthioribulose-1-phosphate (MTRu-1-P). This is Methylthioribose-1-phosphate isomerase from Leptospira borgpetersenii serovar Hardjo-bovis (strain JB197).